Consider the following 204-residue polypeptide: UPF0637 protein SaurJH9_1166 (204 aa).

Belongs to the UPF0637 family.

The chain is UPF0637 protein SaurJH9_1166 from Staphylococcus aureus (strain JH9).